The following is a 53-amino-acid chain: MQKFECTLCGYIYDPALVGPDTPDQDGAFEDVSENWVCPLCGAGKEDFEVYED.

One can recognise a Rubredoxin-like domain in the interval 1 to 53 (MQKFECTLCGYIYDPALVGPDTPDQDGAFEDVSENWVCPLCGAGKEDFEVYED). 4 residues coordinate Fe cation: cysteine 6, cysteine 9, cysteine 38, and cysteine 41.

Belongs to the rubredoxin family. Requires Fe(3+) as cofactor.

Rubredoxin is a small nonheme, iron protein lacking acid-labile sulfide. Its single Fe, chelated to 4 Cys, functions as an electron acceptor and may also stabilize the conformation of the molecule. The protein is Rubredoxin of Peptoniphilus asaccharolyticus (Peptostreptococcus asaccharolyticus).